We begin with the raw amino-acid sequence, 183 residues long: uncharacterized protein (183 aa).

A helical membrane pass occupies residues 7–23; it reads LFFTALCFGLTGCIAPP.

It localises to the membrane. This is an uncharacterized protein from Haemophilus influenzae (strain ATCC 51907 / DSM 11121 / KW20 / Rd).